Here is a 1734-residue protein sequence, read N- to C-terminus: Protein TIC 214 (1734 aa).

A run of 6 helical transmembrane segments spans residues 19 to 39 (IINS…FSIG), 68 to 88 (FIAG…HLAL), 91 to 111 (PHTI…WNNH), 133 to 153 (VFLN…SSML), 176 to 196 (VGWL…LVWI), and 227 to 247 (IFSI…PSPI). A coiled-coil region spans residues 1433–1485 (NLNNEEKELADEVELESDNEKQINPESALSNQEKTIQEIYAESKKKKRQNKKQ).

Belongs to the TIC214 family. Part of the Tic complex.

The protein resides in the plastid. It localises to the chloroplast inner membrane. Functionally, involved in protein precursor import into chloroplasts. May be part of an intermediate translocation complex acting as a protein-conducting channel at the inner envelope. The protein is Protein TIC 214 of Lepidium virginicum (Virginia pepperweed).